The primary structure comprises 154 residues: MYKLQFLSCIALTLALVANSAPTLSSTKDTKKQLEPLLLDLQFLLKEVNNYENLKLSRMLTFKFYMPKKATELKHLQCLMEELKPLEEVLNLAQSKNSHLTNIKDSMNNINLTVSELKGSETGFTCEYDDETVTVVEFLNKWITFCQSIYSTLT.

The signal sequence occupies residues Met-1–Ser-20. The O-linked (GalNAc...) threonine glycan is linked to Thr-23. Cys-78 and Cys-126 are joined by a disulfide. Asn-111 carries N-linked (GlcNAc...) asparagine glycosylation.

This sequence belongs to the IL-2 family.

The protein resides in the secreted. Its function is as follows. Cytokine produced by activated CD4-positive helper T-cells and to a lesser extend activated CD8-positive T-cells and natural killer (NK) cells that plays pivotal roles in the immune response and tolerance. Binds to a receptor complex composed of either the high-affinity trimeric IL-2R (IL2RA/CD25, IL2RB/CD122 and IL2RG/CD132) or the low-affinity dimeric IL-2R (IL2RB and IL2RG). Interaction with the receptor leads to oligomerization and conformation changes in the IL-2R subunits resulting in downstream signaling starting with phosphorylation of JAK1 and JAK3. In turn, JAK1 and JAK3 phosphorylate the receptor to form a docking site leading to the phosphorylation of several substrates including STAT5. This process leads to activation of several pathways including STAT, phosphoinositide-3-kinase/PI3K and mitogen-activated protein kinase/MAPK pathways. Functions as a T-cell growth factor and can increase NK-cell cytolytic activity as well. Promotes strong proliferation of activated B-cells and subsequently immunoglobulin production. Plays a pivotal role in regulating the adaptive immune system by controlling the survival and proliferation of regulatory T-cells, which are required for the maintenance of immune tolerance. Moreover, participates in the differentiation and homeostasis of effector T-cell subsets, including Th1, Th2, Th17 as well as memory CD8-positive T-cells. This Camelus bactrianus (Bactrian camel) protein is Interleukin-2 (IL2).